A 346-amino-acid polypeptide reads, in one-letter code: Ribonucleoside-diphosphate reductase subunit beta (346 aa).

Fe cation is bound by residues E89, E120, and H123. Y129 is a catalytic residue. Positions 193, 227, and 230 each coordinate Fe cation.

Belongs to the ribonucleoside diphosphate reductase small chain family. As to quaternary structure, tetramer of two alpha and two beta subunits. Fe cation serves as cofactor.

The catalysed reaction is a 2'-deoxyribonucleoside 5'-diphosphate + [thioredoxin]-disulfide + H2O = a ribonucleoside 5'-diphosphate + [thioredoxin]-dithiol. Its function is as follows. Provides the precursors necessary for DNA synthesis. Catalyzes the biosynthesis of deoxyribonucleotides from the corresponding ribonucleotides. This chain is Ribonucleoside-diphosphate reductase subunit beta (nrdB), found in Chlamydia muridarum (strain MoPn / Nigg).